The primary structure comprises 222 residues: Small ribosomal subunit protein uS3 (222 aa).

The region spanning 38 to 106 (IRKFISEKLA…NVHINIVEIK (69 aa)) is the KH type-2 domain.

The protein belongs to the universal ribosomal protein uS3 family. Part of the 30S ribosomal subunit. Forms a tight complex with proteins S10 and S14.

Its function is as follows. Binds the lower part of the 30S subunit head. Binds mRNA in the 70S ribosome, positioning it for translation. In Lactobacillus gasseri (strain ATCC 33323 / DSM 20243 / BCRC 14619 / CIP 102991 / JCM 1131 / KCTC 3163 / NCIMB 11718 / NCTC 13722 / AM63), this protein is Small ribosomal subunit protein uS3.